Consider the following 509-residue polypeptide: Cardiolipin synthase 1 (509 aa).

Helical transmembrane passes span 4–24 (PIVQLLLIFTIVSIVLFLLNT), 30–50 (YTFVGALWSITIVGISFVIFI), and 59–79 (LAWFLVLALLPIIGVLLYAIF). PLD phosphodiesterase domains lie at 238-265 (VNYRNHRKIVIVDGEIGFTGGLNVGDEY) and 422-449 (KDGFMHAKIVLVDDTIATIGTANMDVRS). Residues His-243, Lys-245, Asp-250, His-427, Lys-429, and Asp-434 contribute to the active site.

It belongs to the phospholipase D family. Cardiolipin synthase subfamily.

It localises to the cell membrane. It catalyses the reaction 2 a 1,2-diacyl-sn-glycero-3-phospho-(1'-sn-glycerol) = a cardiolipin + glycerol. Functionally, catalyzes the reversible phosphatidyl group transfer from one phosphatidylglycerol molecule to another to form cardiolipin (CL) (diphosphatidylglycerol) and glycerol. This is Cardiolipin synthase 1 (cls1) from Bacillus cereus (strain ATCC 14579 / DSM 31 / CCUG 7414 / JCM 2152 / NBRC 15305 / NCIMB 9373 / NCTC 2599 / NRRL B-3711).